Reading from the N-terminus, the 270-residue chain is Large ribosomal subunit protein uL2c (270 aa).

The tract at residues 221–245 (NPIDHPHGGGEGRAPIGRNQPKTPW) is disordered.

This sequence belongs to the universal ribosomal protein uL2 family. As to quaternary structure, part of the 50S ribosomal subunit.

The protein localises to the plastid. The chain is Large ribosomal subunit protein uL2c (rpl2) from Cuscuta gronovii (Common dodder).